The sequence spans 360 residues: UDP-N-acetylglucosamine--N-acetylmuramyl-(pentapeptide) pyrophosphoryl-undecaprenol N-acetylglucosamine transferase (360 aa).

Positions 198 and 289 each coordinate UDP-N-acetyl-alpha-D-glucosamine.

Belongs to the glycosyltransferase 28 family. MurG subfamily.

It is found in the cell membrane. It catalyses the reaction Mur2Ac(oyl-L-Ala-gamma-D-Glu-L-Lys-D-Ala-D-Ala)-di-trans,octa-cis-undecaprenyl diphosphate + UDP-N-acetyl-alpha-D-glucosamine = beta-D-GlcNAc-(1-&gt;4)-Mur2Ac(oyl-L-Ala-gamma-D-Glu-L-Lys-D-Ala-D-Ala)-di-trans,octa-cis-undecaprenyl diphosphate + UDP + H(+). The protein operates within cell wall biogenesis; peptidoglycan biosynthesis. Functionally, cell wall formation. Catalyzes the transfer of a GlcNAc subunit on undecaprenyl-pyrophosphoryl-MurNAc-pentapeptide (lipid intermediate I) to form undecaprenyl-pyrophosphoryl-MurNAc-(pentapeptide)GlcNAc (lipid intermediate II). This Streptococcus pyogenes serotype M49 (strain NZ131) protein is UDP-N-acetylglucosamine--N-acetylmuramyl-(pentapeptide) pyrophosphoryl-undecaprenol N-acetylglucosamine transferase.